Here is a 320-residue protein sequence, read N- to C-terminus: 1-aminocyclopropane-1-carboxylate oxidase 3 (320 aa).

Residues 111–131 (NEYRLAMKDFGKRLEILAEEL) adopt a coiled-coil conformation. One can recognise a Fe2OG dioxygenase domain in the interval 155–256 (GPTFATKLSN…RMSIASFYNP (102 aa)). Residues histidine 180, aspartate 182, and histidine 237 each coordinate Fe cation. Arginine 247 lines the 2-oxoglutarate pocket.

Belongs to the iron/ascorbate-dependent oxidoreductase family. Fe(2+) is required as a cofactor.

It catalyses the reaction 1-aminocyclopropane-1-carboxylate + L-ascorbate + O2 = ethene + L-dehydroascorbate + hydrogen cyanide + CO2 + 2 H2O. It functions in the pathway alkene biosynthesis; ethylene biosynthesis via S-adenosyl-L-methionine; ethylene from S-adenosyl-L-methionine: step 2/2. Functionally, enzyme involved in the ethylene biosynthesis. May promote stem elongation by maximizing the extensibility cells, possibly by activating ethylene biosynthesis, in response to very-long-chain fatty acids (VLCFAs C20:0 to C30:0). In Arabidopsis thaliana (Mouse-ear cress), this protein is 1-aminocyclopropane-1-carboxylate oxidase 3.